The sequence spans 337 residues: Serpentine receptor class beta-6 (337 aa).

The next 7 membrane-spanning stretches (helical) occupy residues 20-40 (QFYTLLTSIFSVFPLLYLIIF), 62-82 (ILISVLNNCVVFAHHVVIPFL), 98-118 (IFQNIGVFGISCPMLTILGIT), 138-158 (IGVFIGVFAMLCDMALVYFFF), 183-203 (WLCYSLLAINSVNLVFNYFLV), 234-254 (TFISFIHVFFFSLYLIFTLII), and 273-293 (GVYITIPTYNLIIGIASCVIL).

Belongs to the nematode receptor-like protein srb family. Expressed in the ADL, ADF and ASH chemosensory neurons in the head and in the PHA and PHB chemosensory neurons in the tail. Low expression also observed in the egg-laying structures in the mid-body region.

It is found in the cell membrane. Mediates recognition and avoidance of Streptomyces species by detecting dodecanoic acid secreted by the bacteria. Also mediates avoidance of decanoic acid which is not secreted by Streptomyces species but this may represent an additional important avoidance response in the environment. The polypeptide is Serpentine receptor class beta-6 (srb-6) (Caenorhabditis elegans).